The following is a 215-amino-acid chain: ATP-dependent dethiobiotin synthetase BioD (215 aa).

13–18 provides a ligand contact to ATP; it reads DIGKTV. Threonine 17 lines the Mg(2+) pocket. Lysine 38 is an active-site residue. Position 42 (threonine 42) interacts with substrate. Residues aspartate 50, 115–118, and 175–176 each bind ATP; these read EGAG and NH. Residues aspartate 50 and glutamate 115 each coordinate Mg(2+).

It belongs to the dethiobiotin synthetase family. As to quaternary structure, homodimer. Mg(2+) is required as a cofactor.

The protein resides in the cytoplasm. It carries out the reaction (7R,8S)-7,8-diammoniononanoate + CO2 + ATP = (4R,5S)-dethiobiotin + ADP + phosphate + 3 H(+). Its pathway is cofactor biosynthesis; biotin biosynthesis; biotin from 7,8-diaminononanoate: step 1/2. In terms of biological role, catalyzes a mechanistically unusual reaction, the ATP-dependent insertion of CO2 between the N7 and N8 nitrogen atoms of 7,8-diaminopelargonic acid (DAPA, also called 7,8-diammoniononanoate) to form a ureido ring. This chain is ATP-dependent dethiobiotin synthetase BioD, found in Neisseria meningitidis serogroup C / serotype 2a (strain ATCC 700532 / DSM 15464 / FAM18).